Reading from the N-terminus, the 349-residue chain is UDP-N-acetylenolpyruvoylglucosamine reductase (349 aa).

In terms of domain architecture, FAD-binding PCMH-type spans 25-197 (GIAARARFAA…VAVTFRLPKQ (173 aa)). The active site involves R173. S249 functions as the Proton donor in the catalytic mechanism. E345 is an active-site residue.

It belongs to the MurB family. Requires FAD as cofactor.

It localises to the cytoplasm. It carries out the reaction UDP-N-acetyl-alpha-D-muramate + NADP(+) = UDP-N-acetyl-3-O-(1-carboxyvinyl)-alpha-D-glucosamine + NADPH + H(+). Its pathway is cell wall biogenesis; peptidoglycan biosynthesis. Its function is as follows. Cell wall formation. This chain is UDP-N-acetylenolpyruvoylglucosamine reductase, found in Burkholderia orbicola (strain MC0-3).